Here is a 660-residue protein sequence, read N- to C-terminus: Methionine--tRNA ligase 1 (660 aa).

The 'HIGH' region motif lies at 15-25 (YYPSGKLHIGH). The 'KMSKS' region motif lies at 310-314 (KMSKS). ATP is bound at residue Lys-313. One can recognise a tRNA-binding domain in the interval 560 to 660 (DFFKVELRVA…QNIPNGTKIK (101 aa)).

It belongs to the class-I aminoacyl-tRNA synthetase family. MetG type 2B subfamily. As to quaternary structure, homodimer.

The protein resides in the cytoplasm. The enzyme catalyses tRNA(Met) + L-methionine + ATP = L-methionyl-tRNA(Met) + AMP + diphosphate. Is required not only for elongation of protein synthesis but also for the initiation of all mRNA translation through initiator tRNA(fMet) aminoacylation. The polypeptide is Methionine--tRNA ligase 1 (Bacillus anthracis).